The primary structure comprises 269 residues: Tryptophan synthase alpha chain (269 aa).

Active-site proton acceptor residues include E49 and D60.

The protein belongs to the TrpA family. In terms of assembly, tetramer of two alpha and two beta chains.

The catalysed reaction is (1S,2R)-1-C-(indol-3-yl)glycerol 3-phosphate + L-serine = D-glyceraldehyde 3-phosphate + L-tryptophan + H2O. The protein operates within amino-acid biosynthesis; L-tryptophan biosynthesis; L-tryptophan from chorismate: step 5/5. Functionally, the alpha subunit is responsible for the aldol cleavage of indoleglycerol phosphate to indole and glyceraldehyde 3-phosphate. The chain is Tryptophan synthase alpha chain from Acidovorax sp. (strain JS42).